The chain runs to 303 residues: Centromere protein O (303 aa).

A coiled-coil region spans residues 38–77 (AALRKNQELVLELRKKRDELKAKIERHKAEIQAFRGREEA).

It belongs to the CENP-O/MCM21 family.

The protein resides in the nucleus. Its subcellular location is the chromosome. It is found in the centromere. Its function is as follows. Probable component of a centromeric complex involved in assembly of kinetochore proteins, mitotic progression and chromosome segregation. In Xenopus tropicalis (Western clawed frog), this protein is Centromere protein O (cenpo).